The primary structure comprises 1193 residues: MALVQTHGSRGLHPEASDPGRQPSRRRSRQSSPGAVPEPARARRRRAPATTASGSRAAPTARRASSPPLLTMEAKPLPPAKKKRGTVVTPQGHGTLQAIDVATNGAVEIKYHLDLPRALEKLLQVNRAPPLPTDLTPQRLRTLDSSGLRALVLALRPVRAEVWTCLPRGLVSMTTIEAEEGQADHHDVVQHQMQAPRLHFPLKFLVKGTQVQLVQHVHPVQRCEHCGRLYKHKHECSARRRHFYFHHINSHSSNWWQEIQFFPIGSHPRTERLFLTYDVETYTWMGSFGKQLVPFMLVMKLSGDDRLVELALDLALQLKWDRWHGDPRTFYCVTPEKMAVGQQFRQYRDRLQTALAVDLWTSFLRANPHLADWALEQHGLSDPDELTYEELKKLPHVKGRPRFVELYIVGHNINGFDEIVLAAQVINNRAEVPQPFRITRNFMPRAGKILFNDVTFALPNPAYKKRTDFQLWEQGGCDDIDFKHQFLKVMVRDTFALTHTSLRKAAQAYALPVEKGCCAYKAVNQFYMLGSYRADQDGFPLEEYWKDREEFLLNRELWKQKGQLKYDIIQETLDYCALDVLVTAELVAKLQDSYAHFIRDSVGLPHAHFNIFQRPTISSNSHAIFRQIVYRAEKPSRANLGAGLLAPSHELYDYVRATIRGGRCYPTYIGILDEPLYVYDICGMYASALTHPMPWGTPLSPYERALAVREWQASLDDLGTCISYFDPDLLPGIFTIDADPPDELMLDPLPPFCSRKGGRLCWTNEPLRGEVATSVDLITLHNRGWQVRIVPDELTTVFPEWKCVAREYVQLNIAAKERADKEKNQTMRSIAKLLSNALYGSFATKLDNKKIVFSDQMDEGLLKGISAGTVNIKSSSFLETDNLSAEVMPAFEREYLPQHVALLDSDPEDSEDEQRPAPFYTPPAGTPGHVAYTYKPITFLDVDEGDMCLHTLEKVDPLVDNDRYPSHVASFVLAWTRAFVSEWSGFLYDEDRGVPLEDRPIKSVYGDTDSLFVTQRGHELMETRGKKRIKKNGGKLVFDPNQPDLTWLVECETVCAHCGADAYAPESVFLAPKLYALKSLLCPACGQTSKGNVRAKGHAAEALNYELMVNCYLADAQGADRERFSTSRMSLKRTLASAQPGAHPFTVTETTLTRTLRPWKDRTLAALDAHRLAPYSRSRPNPRNEEVCWIEMP.

Residues 1 to 88 (MALVQTHGSR…PAKKKRGTVV (88 aa)) are disordered. Over residues 48–68 (PATTASGSRAAPTARRASSPP) the composition is skewed to low complexity.

It belongs to the DNA polymerase type-B family. In terms of assembly, heterodimer with the terminal protein; this heterodimer binds to bp 9 to 18 of the genome. Forms a complex with viral pTP, DBP and hosts NFIA and POU2F1/OCT1 for initiation of replication.

The protein localises to the host nucleus. It carries out the reaction DNA(n) + a 2'-deoxyribonucleoside 5'-triphosphate = DNA(n+1) + diphosphate. Eukaryotic-type DNA polymerase involved in viral genomic replication. DNA synthesis is protein primed, and acts in a strand displacement replication. Assembles in complex with viral pTP, DBP, host NFIA and host POU2F1/OCT1 on viral origin of replication. The polymerase covalently transfers dCMP onto pTP, thereby initiating complementary strand synthesis. The polypeptide is DNA polymerase (Homo sapiens (Human)).